We begin with the raw amino-acid sequence, 376 residues long: MANSWRISALRERHLALGSQLEDWNGMGTAWTYASDLADHHEAIRTRAGLMDVSGLKKVHYVGPHAESLLDYATTRDIGKLYPGKSVYACLLDEDGKFIDDCIVYRTGPNAFMVVHGAGTGHEMLIRSAQGRQVAVLFDDDLHDLSLQGPRAVDFLAEHVPGIRDLPYFHHLQTKLFDRPVMISRTGYTGERGYEIFCKAADAPAIWDAILEQGKGYGIIPCAFTALDWLRVESYLLFFPYDNSQMYPFADQKAGDTLWELGLDFTVSPGKQDFRGAGEHYRLKGQERFKIFGVLLDGHQAAQGGDTLWHDGRQVGVITCSMYSRLTERSMAIARVEPQIAEQGVPLQVRGSLDCAAIAHSLPFDDPEKKKRTAKG.

As to quaternary structure, the heme-dependent oxidative N-demethylase (HODM) is a heterotetramer composed of a catalytic alpha subunit, a FMN/2Fe-2S-dependent oxidoreductase beta subunit, a gamma subunit with putative aminotransferase activity, and a delta subunit of unknown function.

Its function is as follows. Component of the heme-dependent oxidative N-demethylase (HODM) enzyme, that catalyzes the NADPH-dependent oxidation of dimethylamine (DMA) to methylamine (MA) and formaldehyde. Functions in bacterial methylated amine catabolism, linking alkylamine oxidation to the tetrahydrofolate C1 pool. The gamma subunit of HODM may act as an aminomethyltransferase involved in the detoxification of formaldehyde released by the alpha subunit; this process requires tetrahydrofolate (THF). In Ectopseudomonas mendocina (strain ymp) (Pseudomonas mendocina), this protein is Heme-dependent oxidative N-demethylase gamma subunit.